The sequence spans 246 residues: LexA repressor (246 aa).

Residues 1–34 form a disordered region; sequence MATPQTGKKTPSRRVSELPDGPPDATGLTPRQQR. The segment at residues 52-72 is a DNA-binding region (H-T-H motif); the sequence is MREIGEAVGLTSSSSVAHQLK. Active-site for autocatalytic cleavage activity residues include Ser-170 and Lys-207.

Belongs to the peptidase S24 family. Homodimer.

It catalyses the reaction Hydrolysis of Ala-|-Gly bond in repressor LexA.. Its function is as follows. Represses a number of genes involved in the response to DNA damage (SOS response), including recA and lexA. In the presence of single-stranded DNA, RecA interacts with LexA causing an autocatalytic cleavage which disrupts the DNA-binding part of LexA, leading to derepression of the SOS regulon and eventually DNA repair. The chain is LexA repressor from Nocardioides sp. (strain ATCC BAA-499 / JS614).